The sequence spans 400 residues: Acetate kinase (400 aa).

Residue Asn9 coordinates Mg(2+). Lys16 serves as a coordination point for ATP. Arg90 provides a ligand contact to substrate. The active-site Proton donor/acceptor is the Asp147. ATP-binding positions include 207 to 211 (HIGNG), 282 to 284 (DLR), and 330 to 334 (GIGEN). Residue Glu385 participates in Mg(2+) binding.

This sequence belongs to the acetokinase family. In terms of assembly, homodimer. Mg(2+) is required as a cofactor. Requires Mn(2+) as cofactor.

Its subcellular location is the cytoplasm. It catalyses the reaction acetate + ATP = acetyl phosphate + ADP. It functions in the pathway metabolic intermediate biosynthesis; acetyl-CoA biosynthesis; acetyl-CoA from acetate: step 1/2. Functionally, catalyzes the formation of acetyl phosphate from acetate and ATP. Can also catalyze the reverse reaction. This Staphylococcus aureus (strain USA300) protein is Acetate kinase.